The primary structure comprises 115 residues: Small ribosomal subunit protein bS18c (115 aa).

Positions 91–115 (TNALKARTQNKDQKKEKFQINKKKK) are disordered. Positions 99-109 (QNKDQKKEKFQ) are enriched in basic and acidic residues.

The protein belongs to the bacterial ribosomal protein bS18 family. In terms of assembly, part of the 30S ribosomal subunit.

The protein localises to the plastid. Its subcellular location is the chloroplast. The polypeptide is Small ribosomal subunit protein bS18c (Ipomoea purpurea (Common morning glory)).